A 436-amino-acid chain; its full sequence is MSRSRHVGKIRKRLEDVKNQWTRPARADFSDNESARLATDALLDGGPEAYWRALSQEGEVDFLSSAEAQYIQAQAKEPPDAPDSAGGAESGPRGLDSCSLQSGTYFPVASEGSEPALLHTWTLAEKPYLKEKSSATIYFQMDKHNNIRDLVRRCISRASQVLAILMDVFTDVEILCDILEAANKRGVFVCVLLDQGGVKLFQEMCDKVQISDIHLKNISIRSVEGEVYCAKSGRKFAGQIQEKFIISDWRFVLSGSYSFSWLCGHVHRNILSKFTGQAVELFDEEFRRLYASSKPLMGLKSPRLVAPFQPNKGPEAPNGRLSGTSDSASDRTSSNPFSSLSTGSNAHNQSLSTSSGPSSPLAPIPPTVPRLQPYHSTRRAVAPQPLLVPMRPHEGAPAPYSSLMAYRPTRLQLQQLGLVPRVTHPWRPFLQALPHF.

Residues 1-298 (MSRSRHVGKI…LYASSKPLMG (298 aa)) are DUF1669. The interval 73 to 95 (AQAKEPPDAPDSAGGAESGPRGL) is disordered. A phosphoserine mark is found at serine 301, serine 329, serine 350, and serine 359. The tract at residues 302–371 (PRLVAPFQPN…APIPPTVPRL (70 aa)) is disordered. Over residues 321–349 (LSGTSDSASDRTSSNPFSSLSTGSNAHNQ) the composition is skewed to polar residues. Residues 350–359 (SLSTSSGPSS) are compositionally biased toward low complexity.

Belongs to the FAM83 family. Directly interacts (via DUF1669) with casein kinase isoforms CSNK1A1, CSNK1A1L, CSNK1D and CSNK1E. May be phosphorylated upon EGFR activation. In terms of tissue distribution, widely expressed, with relatively higher expression levels in adipose tissues, especially in epididymal and inguinal white adipose tissue (at protein level).

The protein localises to the cytoplasm. The protein resides in the mitochondrion. Involved in mitochondrial maintenance during adipogenesis. May be acting by playing a role in the maintenance of normal mitochondrial function. The sequence is that of Protein FAM83A from Mus musculus (Mouse).